A 1014-amino-acid chain; its full sequence is Nebulette (1014 aa).

The disordered stretch occupies residues M1–E24. Residues I9–E24 are compositionally biased toward acidic residues. Nebulin repeat units lie at residues F29–D63, K64–N99, S100–F136, S137–T172, Y173–N205, K206–D241, K242–D278, P279–G313, M314–G348, K349–G385, R386–G422, K423–G459, K460–G496, K497–G533, K534–S569, N570–V599, G600–A635, I636–P666, V667–Q693, R694–T728, L729–G759, R760–G794, and R795–E830. Residue D96 is modified to Omega-N-methylarginine. R795 carries the post-translational modification Omega-N-methylarginine. A linker region spans residues G836–S953. Positions P954 to N1014 constitute an SH3 domain.

Interacts (via nebulin repeats 1-5) with DESM (via rod region). Interacts (via SH3 domain) with XIRP2. As to quaternary structure, interacts with ZYX/Zyxin. In terms of tissue distribution, abundantly expressed in cardiac muscle, but not in skeletal or smooth muscle. Localized to Z-lines in cardiac cells and to dense bodies in nonmuscle cells. Isoform 2 is expressed in non-muscle cells such as in fibroblasts.

Its subcellular location is the cytoplasm. Binds to actin and plays an important role in the assembly of the Z-disk. May functionally link sarcomeric actin to the desmin intermediate filaments in the heart muscle sarcomeres. In terms of biological role, may play a role in the assembly of focal adhesions. The polypeptide is Nebulette (Homo sapiens (Human)).